Reading from the N-terminus, the 155-residue chain is Deoxyuridine 5'-triphosphate nucleotidohydrolase (155 aa).

Substrate is bound by residues 75–77 (RSG), N88, and 92–94 (TVD).

It belongs to the dUTPase family. Mg(2+) serves as cofactor.

It catalyses the reaction dUTP + H2O = dUMP + diphosphate + H(+). The protein operates within pyrimidine metabolism; dUMP biosynthesis; dUMP from dCTP (dUTP route): step 2/2. Functionally, this enzyme is involved in nucleotide metabolism: it produces dUMP, the immediate precursor of thymidine nucleotides and it decreases the intracellular concentration of dUTP so that uracil cannot be incorporated into DNA. This chain is Deoxyuridine 5'-triphosphate nucleotidohydrolase, found in Caulobacter vibrioides (strain ATCC 19089 / CIP 103742 / CB 15) (Caulobacter crescentus).